The following is a 32-amino-acid chain: MSDIN-like toxin proprotein 1 (32 aa).

Positions 1 to 10 (MSDINATCLP) are excised as a propeptide. A cross-link (cyclopeptide (Ala-Pro)) is located at residues 11-17 (AWLALCP). The propeptide occupies 18-32 (CVGDDVNPTLTRGGT).

Belongs to the MSDIN fungal toxin family. Processed by the macrocyclase-peptidase enzyme POPB to yield a toxic cyclic heptapeptide. POPB first removes 10 residues from the N-terminus. Conformational trapping of the remaining peptide forces the enzyme to release this intermediate rather than proceed to macrocyclization. The enzyme rebinds the remaining peptide in a different conformation and catalyzes macrocyclization of the N-terminal 7 residues.

Probable toxin that belongs to the MSDIN-like toxin family responsible for a large number of food poisoning cases and deaths. This chain is MSDIN-like toxin proprotein 1, found in Amanita fuligineoides.